The primary structure comprises 2139 residues: Voltage-dependent L-type calcium channel subunit alpha-1C (2139 aa).

Residues 1–20 (MVNENTRMYVPEENHQGSNY) are disordered. The Cytoplasmic portion of the chain corresponds to 1 to 124 (MVNENTRMYV…RACISIVEWK (124 aa)). The calmodulin-binding stretch occupies residues 47 to 68 (GAALSWQAAIDAARQAKLMGSA). A disordered region spans residues 73 to 98 (ISTVSSTQRKRQQYGKPKKQGGTTAT). A compositionally biased stretch (basic residues) spans 80 to 91 (QRKRQQYGKPKK). An I repeat occupies 111–408 (NPIRRACISI…LVLGVLSGEF (298 aa)). A helical transmembrane segment spans residues 125–143 (PFEIIILLTIFANCVALAI). Over 144-158 (YIPFPEDDSNATNSN) the chain is Extracellular. The N-linked (GlcNAc...) asparagine glycan is linked to Asn153. The chain crosses the membrane as a helical span at residues 159–179 (LERVEYLFLIIFTVEAFLKVI). Residues 180-188 (AYGLLFHPN) are Cytoplasmic-facing. A helical transmembrane segment spans residues 189 to 209 (AYLRNGWNLLDFIIVVVGLFS). Residues 210 to 232 (AILEQATKADGANALGGKGAGFD) are Extracellular-facing. Residues 233–251 (VKALRAFRVLRPLRLVSGV) traverse the membrane as a helical segment. At 252–268 (PSLQVVLNSIIKAMVPL) the chain is on the cytoplasmic side. The chain crosses the membrane as a helical span at residues 269-290 (LHIALLVLFVIIIYAIIGLELF). Topologically, residues 291–350 (MGKMHKTCYNQEGIIDVPAEEDPSPCALETGHGRQCQNGTVCKPGWDGPKHGITNFDNFA) are extracellular. Cystine bridges form between Cys298–Cys326 and Cys316–Cys332. Residue Asn328 is glycosylated (N-linked (GlcNAc...) asparagine). Residues 351 to 372 (FAMLTVFQCITMEGWTDVLYWM) constitute an intramembrane region (pore-forming). The Selectivity filter of repeat I signature appears at 361-364 (TMEG). Glu363 contacts Ca(2+). Residues 373–380 (QDAMGYEL) are Extracellular-facing. Residues 381-401 (PWVYFVSLVIFGSFFVLNLVL) form a helical membrane-spanning segment. The Cytoplasmic portion of the chain corresponds to 402–524 (GVLSGEFSKE…RKCRAAVKSN (123 aa)). The AID/alpha-interaction domain; mediates interaction with the beta subunit stretch occupies residues 428 to 445 (QQLEEDLKGYLDWITQAE). The segment at 449–481 (PENEDEGMDEDKPRNMSMPTSETESVNTENVAG) is disordered. The segment covering 465–478 (SMPTSETESVNTEN) has biased composition (polar residues). Position 469 is a phosphoserine (Ser469). Thr476 carries the post-translational modification Phosphothreonine. The II repeat unit spans residues 510 to 756 (NRFCRRKCRA…VFLAIAVDNL (247 aa)). Residues 525-543 (VFYWLVIFLVFLNTLTIAS) traverse the membrane as a helical segment. Residues 544-554 (EHYNQPHWLTE) are Extracellular-facing. A helical membrane pass occupies residues 555–575 (VQDTANKALLALFTAEMLLKM). The Cytoplasmic segment spans residues 576-586 (YSLGLQAYFVS). The chain crosses the membrane as a helical span at residues 587–606 (LFNRFDCFIVCGGILETILV). The Extracellular segment spans residues 607–615 (ETKIMSPLG). A helical transmembrane segment spans residues 616–634 (ISVLRCVRLLRIFKITRYW). At 635–653 (NSLSNLVASLLNSVRSIAS) the chain is on the cytoplasmic side. Residues 654–673 (LLLLLFLFIIIFSLLGMQLF) traverse the membrane as a helical segment. At 674-693 (GGKFNFDEMQTRRSTFDNFP) the chain is on the extracellular side. An intramembrane region (pore-forming) is located at residues 694-715 (QSLLTVFQILTGEDWNSVMYDG). Positions 704–707 (TGED) match the Selectivity filter of repeat II motif. Glu706 contributes to the Ca(2+) binding site. Residues 716 to 725 (IMAYGGPSFP) are Extracellular-facing. A helical membrane pass occupies residues 726-745 (GMLVCIYFIILFICGNYILL). At 746–900 (NVFLAIAVDN…LQCHRIVNDT (155 aa)) the chain is on the cytoplasmic side. The tract at residues 764 to 861 (SAQKEEEEEK…EMPVGPRPRP (98 aa)) is disordered. Basic and acidic residues predominate over residues 783-806 (SPEKKQEVMEKPAVEESKEEKIEL). Phosphoserine occurs at positions 808 and 815. The tract at residues 829–876 (SENEDKSPHSNPDTAGEEDEEEPEMPVGPRPRPLSELHLKEKAVPMPE) is interaction with STAC2. The span at 843–852 (AGEEDEEEPE) shows a compositional bias: acidic residues. Residues 887 to 1169 (NRFRLQCHRI…IFVGFVIVTF (283 aa)) form an III repeat. The chain crosses the membrane as a helical span at residues 901 to 919 (IFTNLILFFILLSSISLAA). Residues 920-931 (EDPVQHTSFRNH) lie on the Extracellular side of the membrane. Residues 932 to 951 (ILGNADYVFTSIFTLEIILK) traverse the membrane as a helical segment. Over 952 to 967 (MTAYGAFLHKGSFCRN) the chain is Cytoplasmic. A helical membrane pass occupies residues 968 to 986 (YFNILDLLVVSVSLISFGI). Over 987 to 993 (QSSAINV) the chain is Extracellular. Residues 994–1012 (VKILRVLRVLRPLRAINRA) traverse the membrane as a helical segment. The Cytoplasmic segment spans residues 1013-1031 (KGLKHVVQCVFVAIRTIGN). Residues 1032–1051 (IVIVTTLLQFMFACIGVQLF) form a helical membrane-spanning segment. Over 1052 to 1101 (KGKLYTCSDSSKQTEAECKGNYITYKDGEVDHPIIQPRSWENSKFDFDNV) the chain is Extracellular. The cysteines at positions 1058 and 1069 are disulfide-linked. The segment at 1089–1178 (RSWENSKFDF…FQEQGEQEYK (90 aa)) is dihydropyridine binding. An intramembrane region (pore-forming) is located at residues 1102–1122 (LAAMMALFTVSTFEGWPELLY). Residues 1113 to 1116 (TFEG) carry the Selectivity filter of repeat III motif. Residue Glu1115 participates in Ca(2+) binding. At 1123 to 1139 (RSIDSHTEDKGPIYNYR) the chain is on the extracellular side. Residues 1140-1161 (VEISIFFIIYIIIIAFFMMNIF) form a helical membrane-spanning segment. At 1162–1219 (VGFVIVTFQEQGEQEYKNCELDKNQRQCVEYALKARPLRRYIPKNQHQYKVWYVVNST) the chain is on the cytoplasmic side. The IV repeat unit spans residues 1206–1479 (NQHQYKVWYV…LFVAVIMDNF (274 aa)). A helical membrane pass occupies residues 1220 to 1241 (YFEYLMFVLILLNTICLAMQHY). Residues 1242–1249 (GQSCLFKI) lie on the Extracellular side of the membrane. A helical transmembrane segment spans residues 1250–1271 (AMNILNMLFTGLFTVEMILKLI). Over 1272–1281 (AFKPKGYFSD) the chain is Cytoplasmic. The helical transmembrane segment at 1282–1301 (PWNVFDFLIVIGSIIDVILS) threads the bilayer. The Extracellular portion of the chain corresponds to 1302 to 1324 (ETNPAEHTQCSPSMSAEENSRIS). A helical membrane pass occupies residues 1325–1343 (ITFFRLFRVMRLVKLLSRG). The Cytoplasmic portion of the chain corresponds to 1344 to 1361 (EGIRTLLWTFIKSFQALP). The helical transmembrane segment at 1362-1382 (YVALLIVMLFFIYAVIGMQVF) threads the bilayer. Residues 1383 to 1404 (GKIALNDTTEINRNNNFQTFPQ) lie on the Extracellular side of the membrane. Asn1388 carries an N-linked (GlcNAc...) asparagine glycan. Residues 1405–1423 (AVLLLFRCATGEAWQDIML) constitute an intramembrane region (pore-forming). The short motif at 1414–1417 (TGEA) is the Selectivity filter of repeat IV element. Residues 1424-1451 (ACMPGKKCAPESEPSNSTEGETPCGSSF) lie on the Extracellular side of the membrane. The segment at 1430–1498 (KCAPESEPSN…LGPHHLDEFK (69 aa)) is dihydropyridine binding. The cysteines at positions 1431 and 1447 are disulfide-linked. The N-linked (GlcNAc...) asparagine glycan is linked to Asn1439. A phenylalkylamine binding region spans residues 1444 to 1486 (ETPCGSSFAVFYFISFYMLCAFLIINLFVAVIMDNFDYLTRDW). Residues 1452–1476 (AVFYFISFYMLCAFLIINLFVAVIM) traverse the membrane as a helical segment. Residues 1477-2139 (DNFDYLTRDW…ADSRSYVSNL (663 aa)) are Cytoplasmic-facing. The interval 1611–1638 (DEVTVGKFYATFLIQEYFRKFKKRKEQG) is important for interaction with STAC1, STAC2 and STAC3. A calmodulin-binding region spans residues 1611–1644 (DEVTVGKFYATFLIQEYFRKFKKRKEQGLVGKPS). A calmodulin-binding IQ region region spans residues 1617–1637 (KFYATFLIQEYFRKFKKRKEQ). Residues 1651 to 1670 (LQAGLRTLHDIGPEIRRAIS) are important for localization in at the junctional membrane. 2 positions are modified to phosphoserine: Ser1670 and Ser1691. Composition is skewed to polar residues over residues 1732-1741 (KTGNNQADTE) and 1751-1763 (STFT…STGS). Positions 1732–1773 (KTGNNQADTESPSHEKLVDSTFTPSSYSSTGSNANINNANNT) are disordered. The segment covering 1764–1773 (NANINNANNT) has biased composition (low complexity). Position 1897 is a phosphoserine; by PKA (Ser1897). The interval 1940-1966 (RSHSPTTFPRPCPTPPVTPGSRGRPLR) is disordered. The span at 1947 to 1957 (FPRPCPTPPVT) shows a compositional bias: pro residues.

The protein belongs to the calcium channel alpha-1 subunit (TC 1.A.1.11) family. CACNA1C subfamily. In terms of assembly, component of a calcium channel complex consisting of a pore-forming alpha subunit (CACNA1C) and ancillary beta, gamma and delta subunits. The channel complex contains alpha, beta, gamma and delta subunits in a 1:1:1:1 ratio, i.e. it contains only one of each type of subunit. CACNA1C channel activity is modulated by ancillary subunits, such as CACNB1, CACNB2, CACNB3, CACNA2D1 and CACNA2D4. Interacts with the gamma subunits CACNG4, CACNG6, CACNG7 and CACNG8. Interacts with CACNB1. Interacts with CACNB2. Identified in a complex with CACNA2D4 and CACNB3. Interacts with CACNB3. Interacts with CACNA2D1. Interacts with CACNA2D4. Interacts with CALM1. Interacts (via the N-terminus and the C-terminal C and IQ motifs) with CABP1; this inhibits Ca(2+)-dependent channel inactivation. The binding via the C motif is calcium independent whereas the binding via IQ requires the presence of calcium and is mutually exclusive with calmodulin binding. The binding to the cytoplasmic N-terminal domain is calcium independent but is essential for the channel modulation. Interacts (via C-terminal CDB motif) with CABP5; in a calcium-dependent manner. Interacts with CIB1; the interaction increases upon cardiomyocytes hypertrophy. Interacts with STAC2 and STAC3; this inhibits channel inactivation. Phosphorylation by PKA at Ser-1897 activates the channel. Elevated levels of blood glucose lead to increased phosphorylation by PKA. Detected in embryonic heart. Detected in retina in rod bipolar cells. Detected in tibialis artery (at protein level). Detected in smooth muscle cells from tibialis artery and in mesenteric artery. High expression in heart, followed by brain and spinal cord.

It is found in the cell membrane. Its subcellular location is the sarcolemma. The protein resides in the perikaryon. It localises to the postsynaptic density membrane. The protein localises to the cell projection. It is found in the dendrite. Its subcellular location is the T-tubule. It carries out the reaction Ca(2+)(in) = Ca(2+)(out). Inhibited by dihydropyridines (DHP), such as isradipine. Inhibited by nifedipine. Channel activity is regulated by Ca(2+) and calmodulin. Binding of STAC1, STAC2 or STAC3 to a region that overlaps with the calmodulin binding site inhibits channel inactivation by Ca(2+) and calmodulin. Binding of calmodulin or CABP1 at the same regulatory sites results in opposite effects on the channel function. Shear stress and pressure increases calcium channel activity. Its function is as follows. Pore-forming, alpha-1C subunit of the voltage-gated calcium channel that gives rise to L-type calcium currents. Mediates influx of calcium ions into the cytoplasm, and thereby triggers calcium release from the sarcoplasm. Plays an important role in excitation-contraction coupling in the heart. Required for normal heart development and normal regulation of heart rhythm. Required for normal contraction of smooth muscle cells in blood vessels and in the intestine. Essential for normal blood pressure regulation via its role in the contraction of arterial smooth muscle cells. Long-lasting (L-type) calcium channels belong to the 'high-voltage activated' (HVA) group. This is Voltage-dependent L-type calcium channel subunit alpha-1C (Cacna1c) from Mus musculus (Mouse).